The primary structure comprises 457 residues: Siroheme synthase (457 aa).

The interval 1–204 is precorrin-2 dehydrogenase /sirohydrochlorin ferrochelatase; it reads MDHLPIFCQL…NDQKAITETT (204 aa). NAD(+)-binding positions include 22 to 23 and 43 to 44; these read DV and LA. Residue Ser128 is modified to Phosphoserine. Positions 216-457 are uroporphyrinogen-III C-methyltransferase; that stretch reads GEVVLVGAGP…RDKLNWFSNH (242 aa). Pro225 serves as a coordination point for S-adenosyl-L-methionine. The active-site Proton acceptor is Asp248. Lys270 functions as the Proton donor in the catalytic mechanism. S-adenosyl-L-methionine-binding positions include 301 to 303, Ile306, 331 to 332, Met382, and Gly411; these read GGD and TA.

It in the N-terminal section; belongs to the precorrin-2 dehydrogenase / sirohydrochlorin ferrochelatase family. This sequence in the C-terminal section; belongs to the precorrin methyltransferase family.

It carries out the reaction uroporphyrinogen III + 2 S-adenosyl-L-methionine = precorrin-2 + 2 S-adenosyl-L-homocysteine + H(+). The catalysed reaction is precorrin-2 + NAD(+) = sirohydrochlorin + NADH + 2 H(+). It catalyses the reaction siroheme + 2 H(+) = sirohydrochlorin + Fe(2+). It participates in cofactor biosynthesis; adenosylcobalamin biosynthesis; precorrin-2 from uroporphyrinogen III: step 1/1. The protein operates within cofactor biosynthesis; adenosylcobalamin biosynthesis; sirohydrochlorin from precorrin-2: step 1/1. Its pathway is porphyrin-containing compound metabolism; siroheme biosynthesis; precorrin-2 from uroporphyrinogen III: step 1/1. It functions in the pathway porphyrin-containing compound metabolism; siroheme biosynthesis; siroheme from sirohydrochlorin: step 1/1. It participates in porphyrin-containing compound metabolism; siroheme biosynthesis; sirohydrochlorin from precorrin-2: step 1/1. Functionally, multifunctional enzyme that catalyzes the SAM-dependent methylations of uroporphyrinogen III at position C-2 and C-7 to form precorrin-2 via precorrin-1. Then it catalyzes the NAD-dependent ring dehydrogenation of precorrin-2 to yield sirohydrochlorin. Finally, it catalyzes the ferrochelation of sirohydrochlorin to yield siroheme. This chain is Siroheme synthase, found in Escherichia coli O7:K1 (strain IAI39 / ExPEC).